Reading from the N-terminus, the 604-residue chain is NADH-ubiquinone oxidoreductase chain 5 (604 aa).

Transmembrane regions (helical) follow at residues 2–22 (FSSLMLVSLLVLTLPIMLSIF), 41–61 (AFITSLIPTMMFIHSGQETII), 85–105 (MIFVPVALFVTWSIMEFSLWY), 115–135 (FFKYLLTFLITMMILVTANNL), 138–158 (LFIGWEGVGIMSFLLIGWWYG), 169–189 (AILYNRIGDIGFIMAMAWFLF), 209–231 (LPLLGLLLAATGKSAQFGLHPWL), 239–259 (TPVSALLHSSTMVVAGVFLLI), 271–291 (IQSLTLCLGAITTLFTAICAL), 299–318 (IIAFSTSSQLGLMIVTIGIN), 323–345 (AFLHICTHAFFKAMLFMCSGSII), 364–384 (MPFTTTSLIIGSLALTGIPFL), 411–431 (LIATSLTAVYSTRIIFFALLG), 455–475 (LLIGSIFAGFFISNNIYPTTV), 486–506 (LTALAVTILGFTLALELSLMT), and 582–602 (IKLYFLSFLITLTLSMLLFNL).

This sequence belongs to the complex I subunit 5 family. In terms of assembly, core subunit of respiratory chain NADH dehydrogenase (Complex I) which is composed of 45 different subunits.

The protein localises to the mitochondrion inner membrane. The catalysed reaction is a ubiquinone + NADH + 5 H(+)(in) = a ubiquinol + NAD(+) + 4 H(+)(out). Its function is as follows. Core subunit of the mitochondrial membrane respiratory chain NADH dehydrogenase (Complex I) which catalyzes electron transfer from NADH through the respiratory chain, using ubiquinone as an electron acceptor. Essential for the catalytic activity and assembly of complex I. In Equus caballus (Horse), this protein is NADH-ubiquinone oxidoreductase chain 5 (MT-ND5).